A 532-amino-acid chain; its full sequence is Probable 1,4-beta-D-glucan cellobiohydrolase B (532 aa).

The N-terminal stretch at 1 to 26 (MLASTFSYRMYKTALILAALLGSGQA) is a signal peptide. The segment at 27–461 (QQVGTSQAEV…SNIKVGPIGS (435 aa)) is catalytic. The Nucleophile role is filled by glutamate 238. The Proton donor role is filled by glutamate 243. Asparagine 296 is a glycosylation site (N-linked (GlcNAc...) asparagine). Positions 462–495 (TFNSGGSNPGGGTTTTTTTQPTTTTTTAGNPGGT) are disordered. Residues 462 to 496 (TFNSGGSNPGGGTTTTTTTQPTTTTTTAGNPGGTG) form a thr-rich linker region. A compositionally biased stretch (low complexity) spans 475 to 490 (TTTTTTQPTTTTTTAG). The region spanning 496–532 (GVAQHYGQCGGIGWTGPTTCASPYTCQKLNDYYSQCL) is the CBM1 domain. 2 disulfide bridges follow: cysteine 504/cysteine 521 and cysteine 515/cysteine 531.

Belongs to the glycosyl hydrolase 7 (cellulase C) family.

Its subcellular location is the secreted. It catalyses the reaction Hydrolysis of (1-&gt;4)-beta-D-glucosidic linkages in cellulose and cellotetraose, releasing cellobiose from the non-reducing ends of the chains.. In terms of biological role, the biological conversion of cellulose to glucose generally requires three types of hydrolytic enzymes: (1) Endoglucanases which cut internal beta-1,4-glucosidic bonds; (2) Exocellobiohydrolases that cut the disaccharide cellobiose from the non-reducing end of the cellulose polymer chain; (3) Beta-1,4-glucosidases which hydrolyze the cellobiose and other short cello-oligosaccharides to glucose. This chain is Probable 1,4-beta-D-glucan cellobiohydrolase B (cbhB), found in Aspergillus fumigatus (strain CBS 144.89 / FGSC A1163 / CEA10) (Neosartorya fumigata).